A 940-amino-acid chain; its full sequence is Isoleucine--tRNA ligase (940 aa).

Positions 59–69 (PYANGDIHIGH) match the 'HIGH' region motif. Glutamate 563 lines the L-isoleucyl-5'-AMP pocket. Positions 604 to 608 (KMSKS) match the 'KMSKS' region motif. Lysine 607 is a binding site for ATP. Zn(2+)-binding residues include cysteine 903, cysteine 906, cysteine 923, and cysteine 926.

The protein belongs to the class-I aminoacyl-tRNA synthetase family. IleS type 1 subfamily. Monomer. The cofactor is Zn(2+).

It is found in the cytoplasm. It catalyses the reaction tRNA(Ile) + L-isoleucine + ATP = L-isoleucyl-tRNA(Ile) + AMP + diphosphate. In terms of biological role, catalyzes the attachment of isoleucine to tRNA(Ile). As IleRS can inadvertently accommodate and process structurally similar amino acids such as valine, to avoid such errors it has two additional distinct tRNA(Ile)-dependent editing activities. One activity is designated as 'pretransfer' editing and involves the hydrolysis of activated Val-AMP. The other activity is designated 'posttransfer' editing and involves deacylation of mischarged Val-tRNA(Ile). The sequence is that of Isoleucine--tRNA ligase from Wigglesworthia glossinidia brevipalpis.